We begin with the raw amino-acid sequence, 261 residues long: Hemin import ATP-binding protein HmuV (261 aa).

The region spanning 2–243 is the ABC transporter domain; the sequence is LCANNVSAQI…ALLKRVYNIN (242 aa). 34 to 41 contributes to the ATP binding site; the sequence is GPNGAGKS.

This sequence belongs to the ABC transporter superfamily. Heme (hemin) importer (TC 3.A.1.14.5) family. The complex is composed of two ATP-binding proteins (HmuV), two transmembrane proteins (HmuU) and a solute-binding protein (HmuT).

The protein resides in the cell inner membrane. Its function is as follows. Part of the ABC transporter complex HmuTUV involved in hemin import. Responsible for energy coupling to the transport system. In Pseudoalteromonas translucida (strain TAC 125), this protein is Hemin import ATP-binding protein HmuV.